Here is a 340-residue protein sequence, read N- to C-terminus: GTPase Obg (340 aa).

Residues 1–159 (MGFIDEVKLC…KHVLLKLKVL (159 aa)) form the Obg domain. The OBG-type G domain maps to 160 to 329 (SDVGIIGMPN…LSEKLKKSNS (170 aa)). Residues 166 to 173 (GMPNAGKS), 191 to 195 (FTTVR), 212 to 215 (DIPG), 279 to 282 (NKCD), and 310 to 312 (NGD) each bind GTP. Mg(2+)-binding residues include Ser173 and Thr193.

Belongs to the TRAFAC class OBG-HflX-like GTPase superfamily. OBG GTPase family. As to quaternary structure, monomer. Mg(2+) serves as cofactor.

The protein localises to the cytoplasm. An essential GTPase which binds GTP, GDP and possibly (p)ppGpp with moderate affinity, with high nucleotide exchange rates and a fairly low GTP hydrolysis rate. Plays a role in control of the cell cycle, stress response, ribosome biogenesis and in those bacteria that undergo differentiation, in morphogenesis control. The sequence is that of GTPase Obg from Wolbachia sp. subsp. Drosophila simulans (strain wRi).